A 369-amino-acid chain; its full sequence is tRNA/tmRNA (uracil-C(5))-methyltransferase (369 aa).

S-adenosyl-L-methionine contacts are provided by Gln192, Tyr221, Asn226, Glu242, and Asp302. The Nucleophile role is filled by Cys327. The Proton acceptor role is filled by Glu361.

The protein belongs to the class I-like SAM-binding methyltransferase superfamily. RNA M5U methyltransferase family. TrmA subfamily.

The catalysed reaction is uridine(54) in tRNA + S-adenosyl-L-methionine = 5-methyluridine(54) in tRNA + S-adenosyl-L-homocysteine + H(+). The enzyme catalyses uridine(341) in tmRNA + S-adenosyl-L-methionine = 5-methyluridine(341) in tmRNA + S-adenosyl-L-homocysteine + H(+). In terms of biological role, dual-specificity methyltransferase that catalyzes the formation of 5-methyluridine at position 54 (m5U54) in all tRNAs, and that of position 341 (m5U341) in tmRNA (transfer-mRNA). This Haemophilus ducreyi (strain 35000HP / ATCC 700724) protein is tRNA/tmRNA (uracil-C(5))-methyltransferase.